The following is a 184-amino-acid chain: ATP synthase subunit b, chloroplastic (184 aa).

A helical transmembrane segment spans residues 27 to 49 (LATNPINLSVVLGVLIFFGKGVL).

It belongs to the ATPase B chain family. As to quaternary structure, F-type ATPases have 2 components, F(1) - the catalytic core - and F(0) - the membrane proton channel. F(1) has five subunits: alpha(3), beta(3), gamma(1), delta(1), epsilon(1). F(0) has four main subunits: a(1), b(1), b'(1) and c(10-14). The alpha and beta chains form an alternating ring which encloses part of the gamma chain. F(1) is attached to F(0) by a central stalk formed by the gamma and epsilon chains, while a peripheral stalk is formed by the delta, b and b' chains.

Its subcellular location is the plastid. The protein resides in the chloroplast thylakoid membrane. Functionally, f(1)F(0) ATP synthase produces ATP from ADP in the presence of a proton or sodium gradient. F-type ATPases consist of two structural domains, F(1) containing the extramembraneous catalytic core and F(0) containing the membrane proton channel, linked together by a central stalk and a peripheral stalk. During catalysis, ATP synthesis in the catalytic domain of F(1) is coupled via a rotary mechanism of the central stalk subunits to proton translocation. Its function is as follows. Component of the F(0) channel, it forms part of the peripheral stalk, linking F(1) to F(0). This Nicotiana sylvestris (Wood tobacco) protein is ATP synthase subunit b, chloroplastic.